The chain runs to 163 residues: Nucleotide-binding protein NFA_51200 (163 aa).

Belongs to the YajQ family.

Its function is as follows. Nucleotide-binding protein. The protein is Nucleotide-binding protein NFA_51200 of Nocardia farcinica (strain IFM 10152).